Reading from the N-terminus, the 469-residue chain is 6-phospho-beta-galactosidase (469 aa).

The D-galactose 6-phosphate site is built by Gln-18, His-115, Asn-158, Glu-159, and Asn-296. The active-site Proton donor is the Glu-159. The active-site Nucleophile is Glu-374. D-galactose 6-phosphate-binding residues include Ser-429, Trp-430, Lys-436, and Tyr-438.

This sequence belongs to the glycosyl hydrolase 1 family.

The catalysed reaction is a 6-phospho-beta-D-galactoside + H2O = D-galactose 6-phosphate + an alcohol. It functions in the pathway carbohydrate metabolism; lactose degradation; D-galactose 6-phosphate and beta-D-glucose from lactose 6-phosphate: step 1/1. This chain is 6-phospho-beta-galactosidase, found in Staphylococcus haemolyticus (strain JCSC1435).